The following is a 388-amino-acid chain: Succinate--CoA ligase [ADP-forming] subunit beta (388 aa).

The ATP-grasp domain maps to 9 to 244 (KEILRKFGVA…LDEEDPAEIE (236 aa)). ATP contacts are provided by residues lysine 46, 53–55 (GRG), glutamate 99, alanine 102, and glutamate 107. Mg(2+) is bound by residues asparagine 199 and aspartate 213. Residues asparagine 264 and 321-323 (GIM) each bind substrate.

The protein belongs to the succinate/malate CoA ligase beta subunit family. Heterotetramer of two alpha and two beta subunits. Requires Mg(2+) as cofactor.

The enzyme catalyses succinate + ATP + CoA = succinyl-CoA + ADP + phosphate. It catalyses the reaction GTP + succinate + CoA = succinyl-CoA + GDP + phosphate. It participates in carbohydrate metabolism; tricarboxylic acid cycle; succinate from succinyl-CoA (ligase route): step 1/1. Succinyl-CoA synthetase functions in the citric acid cycle (TCA), coupling the hydrolysis of succinyl-CoA to the synthesis of either ATP or GTP and thus represents the only step of substrate-level phosphorylation in the TCA. The beta subunit provides nucleotide specificity of the enzyme and binds the substrate succinate, while the binding sites for coenzyme A and phosphate are found in the alpha subunit. This Burkholderia thailandensis (strain ATCC 700388 / DSM 13276 / CCUG 48851 / CIP 106301 / E264) protein is Succinate--CoA ligase [ADP-forming] subunit beta.